A 169-amino-acid polypeptide reads, in one-letter code: MPRSQRNDNFIDKTFTIIADILLRIIPMAPGEKEAFTYYRDGMSAQSEGEYAEALQNYYEAMRLETDPYDRSYILYNIGLVHTSNGEHTKALEYYFQALERNPSLPQALNNTALICHYRGEQAIRQGDPETAEAWFDQAAEYWEQAIALAPGNYIEAQNWLKITGRFGE.

TPR repeat units lie at residues 35-68 (AFTYYRDGMSAQSEGEYAEALQNYYEAMRLETDP), 72-105 (SYILYNIGLVHTSNGEHTKALEYYFQALERNPSL), and 120-153 (GEQAIRQGDPETAEAWFDQAAEYWEQAIALAPGN).

The protein belongs to the Ycf3 family.

It is found in the plastid. The protein localises to the chloroplast thylakoid membrane. Essential for the assembly of the photosystem I (PSI) complex. May act as a chaperone-like factor to guide the assembly of the PSI subunits. This chain is Photosystem I assembly protein Ycf3, found in Pinus koraiensis (Korean pine).